Here is a 223-residue protein sequence, read N- to C-terminus: Alpha-S2-casein (223 aa).

A signal peptide spans 1–15 (MKFFIFTCLLAVALA). Phosphoserine is present on residues Ser23, Ser24, Ser25, Ser72, Ser73, Ser74, Ser77, Ser145, Ser147, Ser151, and Ser159. Residues 77–141 (SAEVAPEEVK…AGPFTPTVNR (65 aa)) constitute a repeat. A repeat spans 159–223 (STEVFTKKTK…TNAIPYVRYL (65 aa)).

The protein belongs to the alpha-casein family. Mammary gland specific. Secreted in milk.

The protein localises to the secreted. In terms of biological role, important role in the capacity of milk to transport calcium phosphate. This is Alpha-S2-casein (CSN1S2) from Ovis aries (Sheep).